We begin with the raw amino-acid sequence, 311 residues long: Heparan sulfate glucosamine 3-O-sulfotransferase 1 (311 aa).

The signal sequence occupies residues 1 to 20; it reads MTLLLLGAVLLVAQPQLVPS. An N-linked (GlcNAc...) asparagine glycan is attached at N52. Residues 68–72, R151, and S159 each bind 3'-phosphoadenylyl sulfate; that span reads KGGTR. 3 N-linked (GlcNAc...) asparagine glycosylation sites follow: N196, N246, and N253. Y259 is a 3'-phosphoadenylyl sulfate binding site. Residues C260 and C269 are joined by a disulfide bond. 274–278 serves as a coordination point for 3'-phosphoadenylyl sulfate; sequence KGRAH.

The protein belongs to the sulfotransferase 1 family.

The protein localises to the golgi apparatus lumen. The catalysed reaction is alpha-D-glucosaminyl-[heparan sulfate](n) + 3'-phosphoadenylyl sulfate = 3-sulfo-alpha-D-glucosaminyl-[heparan sulfate](n) + adenosine 3',5'-bisphosphate + H(+). Sulfotransferase that utilizes 3'-phospho-5'-adenylyl sulfate (PAPS) to catalyze the transfer of a sulfo group to position 3 of glucosamine residues in heparan. Catalyzes the rate limiting step in the biosynthesis of heparan sulfate (HSact). This modification is a crucial step in the biosynthesis of anticoagulant heparan sulfate as it completes the structure of the antithrombin pentasaccharide binding site. This is Heparan sulfate glucosamine 3-O-sulfotransferase 1 (Hs3st1) from Rattus norvegicus (Rat).